A 492-amino-acid chain; its full sequence is 2,3-bisphosphoglycerate-independent phosphoglycerate mutase (492 aa).

2 residues coordinate Mn(2+): Asp11 and Ser61. The Phosphoserine intermediate role is filled by Ser61. Substrate is bound by residues His118, 147-148 (RD), Arg177, Arg183, 248-251 (RNDR), and Lys321. Positions 387, 391, 428, 429, and 446 each coordinate Mn(2+).

This sequence belongs to the BPG-independent phosphoglycerate mutase family. In terms of assembly, monomer. Mn(2+) serves as cofactor.

It carries out the reaction (2R)-2-phosphoglycerate = (2R)-3-phosphoglycerate. It functions in the pathway carbohydrate degradation; glycolysis; pyruvate from D-glyceraldehyde 3-phosphate: step 3/5. Its function is as follows. Catalyzes the interconversion of 2-phosphoglycerate and 3-phosphoglycerate. This Helicobacter acinonychis (strain Sheeba) protein is 2,3-bisphosphoglycerate-independent phosphoglycerate mutase.